The chain runs to 113 residues: Guanylate cyclase activator 2B (113 aa).

The first 27 residues, 1–27 (MASRAAAGLLLCGVALVFLVLLQGTQS), serve as a signal peptide directing secretion. Positions 28-97 (VYIQYQGFRV…SIFQALRTIA (70 aa)) are excised as a propeptide. 3 cysteine pairs are disulfide-bonded: cysteine 68-cysteine 81, cysteine 101-cysteine 109, and cysteine 104-cysteine 112.

Belongs to the guanylin family.

The protein resides in the secreted. In terms of biological role, endogenous activator of intestinal guanylate cyclase. It stimulates this enzyme through the same receptor binding region as the heat-stable enterotoxins. May be a potent physiological regulator of intestinal fluid and electrolyte transport. May be an autocrine/paracrine regulator of intestinal salt and water transport. The chain is Guanylate cyclase activator 2B (GUCA2B) from Sus scrofa (Pig).